The following is a 204-amino-acid chain: Methylthioribulose-1-phosphate dehydratase (204 aa).

Zn(2+) contacts are provided by H96 and H98.

The protein belongs to the aldolase class II family. MtnB subfamily. It depends on Zn(2+) as a cofactor.

It catalyses the reaction 5-(methylsulfanyl)-D-ribulose 1-phosphate = 5-methylsulfanyl-2,3-dioxopentyl phosphate + H2O. It participates in amino-acid biosynthesis; L-methionine biosynthesis via salvage pathway; L-methionine from S-methyl-5-thio-alpha-D-ribose 1-phosphate: step 2/6. In terms of biological role, catalyzes the dehydration of methylthioribulose-1-phosphate (MTRu-1-P) into 2,3-diketo-5-methylthiopentyl-1-phosphate (DK-MTP-1-P). In Methylococcus capsulatus (strain ATCC 33009 / NCIMB 11132 / Bath), this protein is Methylthioribulose-1-phosphate dehydratase.